Reading from the N-terminus, the 716-residue chain is Mitochondrial Rho GTPase 1 (716 aa).

Residues 1 to 692 lie on the Cytoplasmic side of the membrane; that stretch reads MSPDAIRVVV…VSVDQDDIKH (692 aa). Positions 3-224 constitute a Miro 1 domain; it reads PDAIRVVVCG…FYLCQRAVTH (222 aa). The disordered stretch occupies residues 58 to 99; sequence NDQDHHHHHQSSPSTMKNKRKHNNKRERERERESSINNVQPN. GTP-binding positions include 84–91, 113–115, and 167–170; these read ERERERES, DTS, and NKSD. Residues 240–275 enclose the EF-hand 1 domain; it reads GAIKPLKRIFWLSDTDQDGYLNFEELSELHKKCFGI. Ca(2+) contacts are provided by D253, D255, D257, Y259, and E264. The interval 303-327 is disordered; sequence TQTPPQQQHLATSAGTPNGTTTTTS. An EF-hand 2 domain is found at 388–423; that stretch reads TGYKFFVDLFIKFDKDNDGGLNEDELNTLFRSTPGI. Ca(2+) contacts are provided by D401, D403, D405, and E412. The 167-residue stretch at 505-671 folds into the Miro 2 domain; the sequence is RNVFNCFIVG…FIQLVDAAKT (167 aa). Residues 514–521, 550–554, and 620–623 each bind GTP; these read GAPKAGKS, ELRGG, and LKAD. A helical; Anchor for type IV membrane protein membrane pass occupies residues 693-713; sequence IIMTGAAIAVVGLVSIWVLNS. The Mitochondrial intermembrane portion of the chain corresponds to 714 to 716; sequence LRR.

The protein belongs to the mitochondrial Rho GTPase family.

It is found in the mitochondrion outer membrane. In terms of biological role, mitochondrial GTPase involved in mitochondrial trafficking. Probably involved in control of anterograde transport of mitochondria and their subcellular distribution. The polypeptide is Mitochondrial Rho GTPase 1 (GEM1) (Candida albicans (strain SC5314 / ATCC MYA-2876) (Yeast)).